The following is a 161-amino-acid chain: ATP synthase subunit b (161 aa).

The helical transmembrane segment at 11-31 threads the bilayer; sequence AISFVLFVWFCMKYIWPPIIL.

Belongs to the ATPase B chain family. F-type ATPases have 2 components, F(1) - the catalytic core - and F(0) - the membrane proton channel. F(1) has five subunits: alpha(3), beta(3), gamma(1), delta(1), epsilon(1). F(0) has three main subunits: a(1), b(2) and c(10-14). The alpha and beta chains form an alternating ring which encloses part of the gamma chain. F(1) is attached to F(0) by a central stalk formed by the gamma and epsilon chains, while a peripheral stalk is formed by the delta and b chains.

The protein resides in the cell membrane. F(1)F(0) ATP synthase produces ATP from ADP in the presence of a proton or sodium gradient. F-type ATPases consist of two structural domains, F(1) containing the extramembraneous catalytic core and F(0) containing the membrane proton channel, linked together by a central stalk and a peripheral stalk. During catalysis, ATP synthesis in the catalytic domain of F(1) is coupled via a rotary mechanism of the central stalk subunits to proton translocation. In terms of biological role, component of the F(0) channel, it forms part of the peripheral stalk, linking F(1) to F(0). This chain is ATP synthase subunit b, found in Buchnera aphidicola subsp. Acyrthosiphon pisum (strain APS) (Acyrthosiphon pisum symbiotic bacterium).